The following is a 286-amino-acid chain: Shikimate dehydrogenase (NADP(+)) (286 aa).

Residues 25-27 and Thr72 each bind shikimate; that span reads SLS. Catalysis depends on Lys76, which acts as the Proton acceptor. Glu88 is an NADP(+) binding site. Shikimate is bound by residues Asn97 and Asp113. NADP(+)-binding positions include 138–142, 162–167, and Ile232; these read GSGGA and NRTIER. Tyr234 lines the shikimate pocket. NADP(+) is bound at residue Gly255.

Belongs to the shikimate dehydrogenase family. Homodimer.

It carries out the reaction shikimate + NADP(+) = 3-dehydroshikimate + NADPH + H(+). It participates in metabolic intermediate biosynthesis; chorismate biosynthesis; chorismate from D-erythrose 4-phosphate and phosphoenolpyruvate: step 4/7. In terms of biological role, involved in the biosynthesis of the chorismate, which leads to the biosynthesis of aromatic amino acids. Catalyzes the reversible NADPH linked reduction of 3-dehydroshikimate (DHSA) to yield shikimate (SA). This chain is Shikimate dehydrogenase (NADP(+)), found in Magnetococcus marinus (strain ATCC BAA-1437 / JCM 17883 / MC-1).